Reading from the N-terminus, the 63-residue chain is Large ribosomal subunit protein uL29 (63 aa).

It belongs to the universal ribosomal protein uL29 family.

The sequence is that of Large ribosomal subunit protein uL29 from Christiangramia forsetii (strain DSM 17595 / CGMCC 1.15422 / KT0803) (Gramella forsetii).